The primary structure comprises 993 residues: Replication protein 1a (993 aa).

The tract at residues 51–409 (NVLGVKDSEV…TIVINGMSMQ (359 aa)) is methyltransferase. One can recognise an Alphavirus-like MT domain in the interval 72–290 (HLTQQEFAPH…HDWENIKSFL (219 aa)). The segment at 545–576 (SDRPEAPSSTPDDTADVCGKEQEVSELDSLSA) is disordered. Residues 687–838 (CVICNSESLS…KIIPDETSDA (152 aa)) form the (+)RNA virus helicase ATP-binding domain. The ATP-dependent helicase stretch occupies residues 712 to 975 (VDGVAGCGKT…LTRHKVTFRY (264 aa)). Position 714–721 (714–721 (GVAGCGKT)) interacts with ATP. One can recognise a (+)RNA virus helicase C-terminal domain in the interval 839-993 (DTTFRSPQDV…DLIAECIARA (155 aa)).

Belongs to the bromoviridae replication protein 1a family. In terms of assembly, interacts with RNA-directed RNA polymerase 2a.

Its subcellular location is the host endoplasmic reticulum membrane. Involved in the virus replication. Contains a helicase domain and a methyltransferase domain. The methyltransferase domain is probably involved in viral RNA capping. Involved in the formation of ER membrane spherular invaginations in which RNA replication complexes form. This Cucumis sativus (Cucumber) protein is Replication protein 1a.